Here is an 87-residue protein sequence, read N- to C-terminus: Alpha-toxin To2 (87 aa).

An N-terminal signal peptide occupies residues 1–20; the sequence is MIRFVLFISCFFLIGTVVEC. The region spanning 22 to 84 is the LCN-type CS-alpha/beta domain; that stretch reads KDGYLMEGDG…IWDSKNNKCG (63 aa). Intrachain disulfides connect cysteine 32/cysteine 83, cysteine 36/cysteine 58, cysteine 44/cysteine 64, and cysteine 48/cysteine 66. Residue lysine 85 is modified to Lysine amide.

As to expression, expressed by the venom gland.

The protein localises to the secreted. Its function is as follows. Alpha toxins bind voltage-independently at site-3 of sodium channels (Nav) and inhibit the inactivation of the activated channels, thereby blocking neuronal transmission. Affects the tetrodotoxin-sensitive sodium current permeability of F-11 rat neuroblastoma cells. Produces a dose dependent increase in amplitude and duration of the current. The polypeptide is Alpha-toxin To2 (Tityus obscurus (Amazonian scorpion)).